The following is a 372-amino-acid chain: GTPase Obg (372 aa).

Residues 1 to 159 enclose the Obg domain; the sequence is MKFIDEARIE…RMLKLELKVL (159 aa). Residues 128–147 are disordered; sequence LHFKSSTNRAPRQKTDGKPG. The 175-residue stretch at 160 to 334 folds into the OBG-type G domain; the sequence is ADVGLLGMPN…LVYAIYDYLA (175 aa). Residues 166 to 173, 191 to 195, 213 to 216, 284 to 287, and 315 to 317 each bind GTP; these read GMPNAGKS, FTTLA, DIPG, NKLD, and SAL. Mg(2+)-binding residues include serine 173 and threonine 193.

Belongs to the TRAFAC class OBG-HflX-like GTPase superfamily. OBG GTPase family. In terms of assembly, monomer. Mg(2+) serves as cofactor.

Its subcellular location is the cytoplasm. Functionally, an essential GTPase which binds GTP, GDP and possibly (p)ppGpp with moderate affinity, with high nucleotide exchange rates and a fairly low GTP hydrolysis rate. Plays a role in control of the cell cycle, stress response, ribosome biogenesis and in those bacteria that undergo differentiation, in morphogenesis control. The sequence is that of GTPase Obg from Burkholderia thailandensis (strain ATCC 700388 / DSM 13276 / CCUG 48851 / CIP 106301 / E264).